Reading from the N-terminus, the 921-residue chain is MEYKNTLLMPKTEFPMRGNLPKREPAMQEKWAEMNIYEKVQEHTKGRPLFVLHDGPPYANGDIHMGHALNKVLKDFIVRYKSMTGFCAPYVPGWDTHGLPIEQALTNKGVKRKEMTVAEFRKLCAEYAYEQVERQREQFKRLGVRADWDNPYITLEPAYEAQQIKVFGDMAKKGYIYKGQKPVYWSPTSESALAEAEIEYQDKKSASIYVAFPVKDGKNVLEGDEKYIIWTTTPWTLPANLGISVHPELEYAIVKVNGEKYIIASELFETVAKTLEWENAEVVKTVKGSELEYTVAKHPFYDRDSLVMLGDHVTTDAGTGCVHTAPGHGEDDFIVGKKYGLEVLCPVDDKGVLTEEAPGFEGLFYDKANKPITEKLEEVGALLKLTFITHSYPHDWRTKKPIIFRATAQWFASIEAFRKELLEAVAETKWVPAWGETRLHNMVRDRGDWCISRQRAWGVPIPVFYAENGDPIITDETINHVADLFREHGSNVWFEREAKDLLPEGFTHSGSPNGEFRKETDIMDVWFDSGSSHQAVLEERDDLQRPADLYLEGSDQYRGWFNSSLSTAVAVTGKAPYKGVLSHGFVLDGEGRKMSKSIGNIVVPKKIMDQLGGDILRLWVSSVDYQSDVRISDDILKQVAEVYRKIRNTFRFLLGNLDDFKPSENTVAVAELREVDRYMLVKLNDLITKVKEAYETYDFAAVYHAIHNFCTIDLSSFYLDFAKDILYIEGANHEDRRAIQTVLYDVLVALTKLVTPILPHTADEVWPYIPGVTEESVQLTDMPEAVQLDGAEALKTKWDAFMTLRDDVLKALEVARNEKVIGKSLNASITLYPTAEMKAMLESINEDLKQLFIVSEYKLGGMMEEAPADAPKYEHTAVVVVQATGETCERCWVVSETIGKDAEHETLCERCATVVKENYVK.

Residues 57–67 (PYANGDIHMGH) carry the 'HIGH' region motif. Glu-552 is a binding site for L-isoleucyl-5'-AMP. Residues 593 to 597 (KMSKS) carry the 'KMSKS' region motif. Lys-596 is a binding site for ATP. Zn(2+) is bound by residues Cys-888, Cys-891, Cys-908, and Cys-911.

This sequence belongs to the class-I aminoacyl-tRNA synthetase family. IleS type 1 subfamily. In terms of assembly, monomer. Zn(2+) serves as cofactor.

It is found in the cytoplasm. The catalysed reaction is tRNA(Ile) + L-isoleucine + ATP = L-isoleucyl-tRNA(Ile) + AMP + diphosphate. Its function is as follows. Catalyzes the attachment of isoleucine to tRNA(Ile). As IleRS can inadvertently accommodate and process structurally similar amino acids such as valine, to avoid such errors it has two additional distinct tRNA(Ile)-dependent editing activities. One activity is designated as 'pretransfer' editing and involves the hydrolysis of activated Val-AMP. The other activity is designated 'posttransfer' editing and involves deacylation of mischarged Val-tRNA(Ile). The protein is Isoleucine--tRNA ligase of Bacillus cereus (strain AH187).